The chain runs to 225 residues: Germin-like protein 3-1 (225 aa).

The first 22 residues, 1-22, serve as a signal peptide directing secretion; sequence MRAAVAHRILLSLALFAVLCRC. Cysteines 31 and 51 form a disulfide. A Cupin type-1 domain is found at 65–216; the sequence is SALSRATNPA…AFKITGQDVQ (152 aa). The N-linked (GlcNAc...) asparagine glycan is linked to Asn81. Mn(2+)-binding residues include His115, His117, Glu122, and His161.

This sequence belongs to the germin family. In terms of assembly, oligomer (believed to be a pentamer but probably hexamer).

The protein localises to the secreted. It localises to the extracellular space. Its subcellular location is the apoplast. In terms of biological role, may play a role in plant defense. Probably has no oxalate oxidase activity even if the active site is conserved. The chain is Germin-like protein 3-1 from Oryza sativa subsp. japonica (Rice).